A 296-amino-acid polypeptide reads, in one-letter code: Phosphoribosylaminoimidazole-succinocarboxamide synthase (296 aa).

It belongs to the SAICAR synthetase family.

It carries out the reaction 5-amino-1-(5-phospho-D-ribosyl)imidazole-4-carboxylate + L-aspartate + ATP = (2S)-2-[5-amino-1-(5-phospho-beta-D-ribosyl)imidazole-4-carboxamido]succinate + ADP + phosphate + 2 H(+). It participates in purine metabolism; IMP biosynthesis via de novo pathway; 5-amino-1-(5-phospho-D-ribosyl)imidazole-4-carboxamide from 5-amino-1-(5-phospho-D-ribosyl)imidazole-4-carboxylate: step 1/2. In Thioalkalivibrio sulfidiphilus (strain HL-EbGR7), this protein is Phosphoribosylaminoimidazole-succinocarboxamide synthase.